The following is a 199-amino-acid chain: MSPITDALVPMVVEQTSRGERSYDIYSRLLKERVIFLTGQVEDHMANLVVAQLLFLESENPDKDIFLYINSPGGSVTAGMSIYDTMQFIKPNVSTVCMGQACSMGAFLLAGGAKGKRYCLPNSRVMIHQPLGGFQGQASDIQIHAKEILTIKHRLNSLLAKHTGQPLEVVEGDTDRDNFMSADQAVEYGLVDSVLTQRD.

The Nucleophile role is filled by Ser-103. His-128 is an active-site residue.

This sequence belongs to the peptidase S14 family. Fourteen ClpP subunits assemble into 2 heptameric rings which stack back to back to give a disk-like structure with a central cavity, resembling the structure of eukaryotic proteasomes.

It localises to the cytoplasm. It catalyses the reaction Hydrolysis of proteins to small peptides in the presence of ATP and magnesium. alpha-casein is the usual test substrate. In the absence of ATP, only oligopeptides shorter than five residues are hydrolyzed (such as succinyl-Leu-Tyr-|-NHMec, and Leu-Tyr-Leu-|-Tyr-Trp, in which cleavage of the -Tyr-|-Leu- and -Tyr-|-Trp bonds also occurs).. In terms of biological role, cleaves peptides in various proteins in a process that requires ATP hydrolysis. Has a chymotrypsin-like activity. Plays a major role in the degradation of misfolded proteins. This Photobacterium profundum (strain SS9) protein is ATP-dependent Clp protease proteolytic subunit.